A 329-amino-acid chain; its full sequence is Cytosolic Fe-S cluster assembly factor NBP35 (329 aa).

Residues 1 to 33 form a disordered region; it reads MAPSQVEDISKTELETPEHCPGPESEQAGKEDA. The segment covering 8 to 18 has biased composition (basic and acidic residues); it reads DISKTELETPE. [4Fe-4S] cluster-binding residues include C20, C34, C37, and C43. 74–81 contributes to the ATP binding site; that stretch reads GKGGVGKS. Residues C248 and C251 each coordinate [4Fe-4S] cluster.

Belongs to the Mrp/NBP35 ATP-binding proteins family. NUBP1/NBP35 subfamily. In terms of assembly, heterotetramer of 2 NBP35 and 2 CFD1 chains. The cofactor is [4Fe-4S] cluster.

It is found in the cytoplasm. The protein localises to the nucleus. Component of the cytosolic iron-sulfur (Fe/S) protein assembly (CIA) machinery. Required for maturation of extramitochondrial Fe-S proteins. The NBP35-CFD1 heterotetramer forms a Fe-S scaffold complex, mediating the de novo assembly of an Fe-S cluster and its transfer to target apoproteins. Required for biogenesis and export of both ribosomal subunits, which may reflect a role in assembly of the Fe/S clusters in RLI1, a protein which performs rRNA processing and ribosome export. The sequence is that of Cytosolic Fe-S cluster assembly factor NBP35 from Debaryomyces hansenii (strain ATCC 36239 / CBS 767 / BCRC 21394 / JCM 1990 / NBRC 0083 / IGC 2968) (Yeast).